Here is a 2643-residue protein sequence, read N- to C-terminus: BAH and coiled-coil domain-containing protein 1 (2643 aa).

Disordered regions lie at residues Ser-23 to Pro-45 and Ser-84 to His-106. Position 220 is an N6-acetyllysine (Lys-220). 2 stretches are compositionally biased toward basic and acidic residues: residues Lys-224 to Lys-249 and Glu-683 to Val-702. Disordered stretches follow at residues Lys-224–Gly-273, Pro-674–Gln-704, Gly-721–Glu-758, Arg-985–Ala-1023, and Thr-1038–Pro-1299. Basic and acidic residues predominate over residues Arg-985–Pro-1003. Positions Arg-1133–Ser-1149 are enriched in pro residues. Polar residues predominate over residues Ala-1210–Glu-1224. A compositionally biased stretch (acidic residues) spans Gln-1269–Val-1284. Coiled coils occupy residues Ala-1346–Ala-1373 and Leu-1437–Ser-1486. The span at Gln-1466–Ser-1484 shows a compositional bias: basic and acidic residues. Disordered stretches follow at residues Gln-1466 to Lys-1520, Gly-1537 to Ser-1559, Lys-1604 to Met-1641, Arg-1746 to Thr-1781, Phe-1875 to Leu-1896, Ser-2055 to Gly-2124, Cys-2322 to Pro-2341, and Ser-2349 to Glu-2386. Residues Pro-1487 to Ser-1501 show a composition bias toward basic residues. Residues Pro-1631–Met-1641 are compositionally biased toward basic and acidic residues. The segment covering Gly-1757 to Thr-1767 has biased composition (basic residues). Positions Phe-1875 to Ala-1892 are enriched in acidic residues. Over residues Ser-2349 to Ser-2374 the composition is skewed to low complexity. Acidic residues predominate over residues Asp-2375–Glu-2386. Residues Glu-2517–Asp-2637 form the BAH domain.

This Mus musculus (Mouse) protein is BAH and coiled-coil domain-containing protein 1 (Bahcc1).